The primary structure comprises 87 residues: Diazepam-binding inhibitor-like 5 (87 aa).

The 86-residue stretch at 2–87 (SQVEFEMACA…VEELKKKEPC (86 aa)) folds into the ACB domain. Residues 29–33 (YSFYK), lysine 55, and tyrosine 74 each bind an acyl-CoA.

This sequence belongs to the ACBP family. Exclusively expressed in late spermatids and spermatozoa. Not found in epididymis, spleen, bone marrow, skin, liver, brain, heart, kidney, muscle.

The protein resides in the cytoplasm. Its function is as follows. May be involved in the energy metabolism of the mature sperm. This is Diazepam-binding inhibitor-like 5 (Dbil5) from Mus musculus (Mouse).